Consider the following 352-residue polypeptide: 3-isopropylmalate dehydrogenase (352 aa).

76–89 provides a ligand contact to NAD(+); sequence GYKWENLPHDKKPE. Residues Arg-96, Arg-106, Arg-134, and Asp-220 each coordinate substrate. Residues Asp-220, Asp-244, and Asp-248 each coordinate Mg(2+). Residue 277-289 coordinates NAD(+); that stretch reads GSAPDIAGQNKAN.

The protein belongs to the isocitrate and isopropylmalate dehydrogenases family. LeuB type 1 subfamily. In terms of assembly, homodimer. It depends on Mg(2+) as a cofactor. Mn(2+) is required as a cofactor.

It is found in the cytoplasm. The catalysed reaction is (2R,3S)-3-isopropylmalate + NAD(+) = 4-methyl-2-oxopentanoate + CO2 + NADH. Its pathway is amino-acid biosynthesis; L-leucine biosynthesis; L-leucine from 3-methyl-2-oxobutanoate: step 3/4. Catalyzes the oxidation of 3-carboxy-2-hydroxy-4-methylpentanoate (3-isopropylmalate) to 3-carboxy-4-methyl-2-oxopentanoate. The product decarboxylates to 4-methyl-2 oxopentanoate. This Chlorobaculum tepidum (strain ATCC 49652 / DSM 12025 / NBRC 103806 / TLS) (Chlorobium tepidum) protein is 3-isopropylmalate dehydrogenase.